We begin with the raw amino-acid sequence, 338 residues long: Glycerol-3-phosphate dehydrogenase [NAD(P)+] (338 aa).

4 residues coordinate NADPH: Ser15, Tyr16, His36, and Lys110. Lys110, Gly139, and Thr141 together coordinate sn-glycerol 3-phosphate. Position 143 (Ala143) interacts with NADPH. Sn-glycerol 3-phosphate is bound by residues Lys195, Asp248, Ser258, Arg259, and Asn260. Lys195 functions as the Proton acceptor in the catalytic mechanism. Position 259 (Arg259) interacts with NADPH. Residues Val283 and Glu285 each coordinate NADPH.

This sequence belongs to the NAD-dependent glycerol-3-phosphate dehydrogenase family.

It is found in the cytoplasm. The enzyme catalyses sn-glycerol 3-phosphate + NAD(+) = dihydroxyacetone phosphate + NADH + H(+). It catalyses the reaction sn-glycerol 3-phosphate + NADP(+) = dihydroxyacetone phosphate + NADPH + H(+). It participates in membrane lipid metabolism; glycerophospholipid metabolism. Catalyzes the reduction of the glycolytic intermediate dihydroxyacetone phosphate (DHAP) to sn-glycerol 3-phosphate (G3P), the key precursor for phospholipid synthesis. The sequence is that of Glycerol-3-phosphate dehydrogenase [NAD(P)+] from Edwardsiella ictaluri (strain 93-146).